A 716-amino-acid chain; its full sequence is Polyribonucleotide nucleotidyltransferase (716 aa).

Residues Asp-488 and Asp-494 each contribute to the Mg(2+) site. Residues 555–614 enclose the KH domain; it reads PKIETITIPTDKIREVIGTGGKVIREIVATTGAKVDINDEGTVKVSASDGAKIKAAIDWI. An S1 motif domain is found at 624-692; that stretch reads GAIYDGKVVK…DRGKTKLSMK (69 aa). Residues 695-716 are disordered; that stretch reads DQETGEDLSKKEAVSPEEAVNT.

It belongs to the polyribonucleotide nucleotidyltransferase family. Mg(2+) is required as a cofactor.

The protein localises to the cytoplasm. The catalysed reaction is RNA(n+1) + phosphate = RNA(n) + a ribonucleoside 5'-diphosphate. Involved in mRNA degradation. Catalyzes the phosphorolysis of single-stranded polyribonucleotides processively in the 3'- to 5'-direction. In Caulobacter sp. (strain K31), this protein is Polyribonucleotide nucleotidyltransferase.